The sequence spans 857 residues: Autoinducer 2 sensor kinase/phosphatase LuxQ (857 aa).

Helical transmembrane passes span 20–40 (IIFL…YYFS) and 283–303 (LGLA…RSWI). The Histidine kinase domain maps to 490–712 (KMSHEIRTPL…TFYLSIPVEK (223 aa)). H493 is modified (phosphohistidine; by autocatalysis). The 116-residue stretch at 735–850 (KVLLVEDNHT…ELHDELLHFK (116 aa)) folds into the Response regulatory domain. The residue at position 784 (D784) is a 4-aspartylphosphate.

In terms of assembly, binds the complex formed by the autoinducer and LuxP.

It is found in the cell inner membrane. It catalyses the reaction ATP + protein L-histidine = ADP + protein N-phospho-L-histidine.. Its function is as follows. At low cell density, in absence of autoinducer has a kinase activity, and autophosphorylates on a histidine residue. The phosphoryl group is then transferred to an aspartate residue in the response regulator domain. The phosphoryl group is transferred to LuxU, and ultimately to LuxO. At high cell density, in the presence of autoinducer, the kinase activity is inactivated, and the response regulator domain has a phosphatase activity. In Vibrio vulnificus (strain YJ016), this protein is Autoinducer 2 sensor kinase/phosphatase LuxQ (luxQ).